A 142-amino-acid polypeptide reads, in one-letter code: Large ribosomal subunit protein uL13 (142 aa).

This sequence belongs to the universal ribosomal protein uL13 family. Part of the 50S ribosomal subunit.

This protein is one of the early assembly proteins of the 50S ribosomal subunit, although it is not seen to bind rRNA by itself. It is important during the early stages of 50S assembly. The chain is Large ribosomal subunit protein uL13 from Pseudomonas aeruginosa (strain LESB58).